The following is a 152-amino-acid chain: Deoxyuridine 5'-triphosphate nucleotidohydrolase (152 aa).

Residues 71–73 (RSG), N84, 88–90 (LID), and M98 contribute to the substrate site.

The protein belongs to the dUTPase family. Mg(2+) is required as a cofactor.

It carries out the reaction dUTP + H2O = dUMP + diphosphate + H(+). It functions in the pathway pyrimidine metabolism; dUMP biosynthesis; dUMP from dCTP (dUTP route): step 2/2. In terms of biological role, this enzyme is involved in nucleotide metabolism: it produces dUMP, the immediate precursor of thymidine nucleotides and it decreases the intracellular concentration of dUTP so that uracil cannot be incorporated into DNA. This chain is Deoxyuridine 5'-triphosphate nucleotidohydrolase, found in Shewanella woodyi (strain ATCC 51908 / MS32).